We begin with the raw amino-acid sequence, 1271 residues long: Diacylglycerol kinase kappa (1271 aa).

Over residues 1 to 15 (MDRGAAAAQGTAPPQ) the composition is skewed to low complexity. The disordered stretch occupies residues 1-160 (MDRGAAAAQG…PEPTPEPVTE (160 aa)). Over residues 23–44 (SPEPPPPWPPPPPPPAPPPAPP) the composition is skewed to pro residues. Repeat copies occupy residues 48 to 51 (EASP), 52 to 55 (EPIP), 56 to 59 (EPCP), 60 to 63 (ELAP), 64 to 67 (GPCP), 68 to 71 (EATS), 72 to 75 (ESAT), 76 to 79 (ELYT), 80 to 83 (EPTP), 84 to 87 (EPAT), 88 to 91 (EPAS), 92 to 95 (EPAP), 96 to 99 (EPAT), 100 to 103 (EPAP), 104 to 107 (EPAT), 108 to 111 (EPAP), 112 to 115 (EPAP), 116 to 119 (EPAT), 120 to 123 (ESAP), 124 to 127 (EPTP), 128 to 131 (EPAL), 132 to 135 (ESVP), 136 to 139 (EPAP), 140 to 143 (ELTP), 144 to 147 (EVAP), 148 to 151 (ELAP), 152 to 155 (EPTP), 156 to 159 (EPVT), 160 to 163 (ELAP), 164 to 167 (EFCP), 168 to 171 (EAAP), 172 to 175 (EFRP), and 176 to 179 (SPAP). The segment at 48 to 179 (EASPEPIPEP…APEFRPSPAP (132 aa)) is 33 X 4 AA approximate tandem repeats of E-P-A-P. The segment covering 52–66 (EPIPEPCPELAPGPC) has biased composition (pro residues). A Phosphotyrosine modification is found at tyrosine 78. A compositionally biased stretch (pro residues) spans 82–116 (TPEPATEPASEPAPEPATEPAPEPATEPAPEPAPE). The span at 139-149 (PELTPEVAPEL) shows a compositional bias: low complexity. The disordered stretch occupies residues 190–209 (ERGLKTSPSPSPSPSPRTPM). In terms of domain architecture, PH spans 216 to 309 (KILKEGPMLK…WINIIKTIQQ (94 aa)). 2 consecutive Phorbol-ester/DAG-type zinc fingers follow at residues 327–377 (MHCW…SKDC) and 398–449 (PHQW…SKEC). The DAGKc domain maps to 487–622 (ACSCPLLIFI…LDRWSVMIRE (136 aa)). 2 disordered regions span residues 805–825 (DDPE…GTLS) and 1252–1271 (RHRE…RSQL). Residues 1199-1268 (PIFVPEEKSS…EGDDPLTPSR (70 aa)) form a required for localization to the plasma membrane region.

This sequence belongs to the eukaryotic diacylglycerol kinase family. In terms of assembly, does not form homooligomers. Post-translationally, phosphorylated at Tyr-78 by some member of the SRC family in response to H(2)O(2). In terms of tissue distribution, expressed in testis, and to a lesser extent in placenta.

The protein resides in the cell membrane. The catalysed reaction is a 1,2-diacyl-sn-glycerol + ATP = a 1,2-diacyl-sn-glycero-3-phosphate + ADP + H(+). It carries out the reaction 1,2-di-(9Z-octadecenoyl)-sn-glycerol + ATP = 1,2-di-(9Z-octadecenoyl)-sn-glycero-3-phosphate + ADP + H(+). It participates in lipid metabolism; glycerolipid metabolism. Its activity is regulated as follows. Inhibited in response to H(2)O(2). Functionally, diacylglycerol kinase that converts diacylglycerol/DAG into phosphatidic acid/phosphatidate/PA and regulates the respective levels of these two bioactive lipids. Thereby, acts as a central switch between the signaling pathways activated by these second messengers with different cellular targets and opposite effects in numerous biological processes. In Homo sapiens (Human), this protein is Diacylglycerol kinase kappa.